A 243-amino-acid polypeptide reads, in one-letter code: MKKSIFSKKLLVSFGSLVTLAAIPLIAISCGQTTDNLSQSQQPGSGTGSGSGTNTENGSNNGSGSGTTNSSGGTNQSGSASGNGSSNSSVSTPDGQHSNPSNPTTSDPKESNPSNPTTSDPKESNPSNPTTSDGQHSNPSNPTTSDPKESNPSNPTTSDGQHSNPSNPTTSDGQHSNPSNPTTSDGQHSNPSNPTTSDGQHSNPSNPTTSDGQHSNPSNPTTSDGQHSNPSNPTTSDGQNQNK.

The N-terminal stretch at 1-29 (MKKSIFSKKLLVSFGSLVTLAAIPLIAIS) is a signal peptide. C30 carries the N-palmitoyl cysteine lipid modification. A lipid anchor (S-diacylglycerol cysteine) is attached at C30. The interval 34 to 243 (TDNLSQSQQP…TTSDGQNQNK (210 aa)) is disordered. Low complexity predominate over residues 52-92 (GTNTENGSNNGSGSGTTNSSGGTNQSGSASGNGSSNSSVST). Positions 93-243 (PDGQHSNPSN…TTSDGQNQNK (151 aa)) are enriched in polar residues. 11 repeat units span residues 97-109 (HSNPSNPTTSDPK), 110-122 (ESNPSNPTTSDPK), 123-135 (ESNPSNPTTSDGQ), 136-148 (HSNPSNPTTSDPK), 149-161 (ESNPSNPTTSDGQ), 162-174 (HSNPSNPTTSDGQ), 175-187 (HSNPSNPTTSDGQ), 188-200 (HSNPSNPTTSDGQ), 201-213 (HSNPSNPTTSDGQ), 214-226 (HSNPSNPTTSDGQ), and 227-239 (HSNPSNPTTSDGQ). The 11 X 13 AA tandem repeats stretch occupies residues 97 to 239 (HSNPSNPTTS…PSNPTTSDGQ (143 aa)).

It localises to the cell membrane. Responsible for the antigenic diversity for host adaptation. Expression in E.coli of a construct containing vlpD, vlpE, and vlpF yields antigenically distinguishable products corresponding to each gene. This is Variant surface antigen E (vlpE) from Mesomycoplasma hyorhinis (Mycoplasma hyorhinis).